A 506-amino-acid chain; its full sequence is Cobyric acid synthase (506 aa).

The GATase cobBQ-type domain occupies 251 to 448; that stretch reads DITIAIVQLP…LHGLFDSDAF (198 aa). Cys332 (nucleophile) is an active-site residue. Residue His440 is part of the active site.

It belongs to the CobB/CobQ family. CobQ subfamily.

It functions in the pathway cofactor biosynthesis; adenosylcobalamin biosynthesis. Catalyzes amidations at positions B, D, E, and G on adenosylcobyrinic A,C-diamide. NH(2) groups are provided by glutamine, and one molecule of ATP is hydrogenolyzed for each amidation. This is Cobyric acid synthase from Salmonella choleraesuis (strain SC-B67).